We begin with the raw amino-acid sequence, 567 residues long: Zinc finger protein 512 (567 aa).

The tract at residues 1–32 (MSSRLGAVPATSGPTTFKQQRSTRIVGAKNSR) is disordered. The span at 12-23 (SGPTTFKQQRST) shows a compositional bias: polar residues. Glycyl lysine isopeptide (Lys-Gly) (interchain with G-Cter in SUMO2) cross-links involve residues K18 and K84. The disordered stretch occupies residues 86–148 (AATSHVEGSG…QARRIRKEPP (63 aa)). Basic residues predominate over residues 119-130 (KKHKLYGRKQRP). The C2H2-type 1 zinc-finger motif lies at 197–220 (FTCHHCGKQLRSLAGMKYHVMANH). K227 participates in a covalent cross-link: Glycyl lysine isopeptide (Lys-Gly) (interchain with G-Cter in SUMO2). Residues 287–310 (LKCHHCGKPYRSKAGLAYHLRSEH) form a C2H2-type 2 zinc finger. K333 is covalently cross-linked (Glycyl lysine isopeptide (Lys-Gly) (interchain with G-Cter in SUMO2)). The C2H2-type 3; atypical zinc finger occupies 406-430 (IQCPNQGCEAVYSSVSGLKAHLGSC). The C2H2-type 4 zinc finger occupies 440–463 (YKCLLCQKEFVSESGVKYHINSVH). The disordered stretch occupies residues 486–567 (QRQQEEEKRR…PKTNHKRGRK (82 aa)). The span at 495 to 508 (RQQHRSRRSLRRRQ) shows a compositional bias: basic residues. Positions 523-532 (VGKDQRRNNE) are enriched in basic and acidic residues. Basic residues predominate over residues 556–567 (KPPKTNHKRGRK).

It belongs to the krueppel C2H2-type zinc-finger protein family.

It is found in the nucleus. In terms of biological role, may be involved in transcriptional regulation. The polypeptide is Zinc finger protein 512 (ZNF512) (Pongo abelii (Sumatran orangutan)).